Consider the following 132-residue polypeptide: Large ribosomal subunit protein bL17 (132 aa).

It belongs to the bacterial ribosomal protein bL17 family. In terms of assembly, part of the 50S ribosomal subunit. Contacts protein L32.

This Shewanella woodyi (strain ATCC 51908 / MS32) protein is Large ribosomal subunit protein bL17.